The sequence spans 352 residues: S-adenosylmethionine:tRNA ribosyltransferase-isomerase (352 aa).

This sequence belongs to the QueA family. Monomer.

It localises to the cytoplasm. It catalyses the reaction 7-aminomethyl-7-carbaguanosine(34) in tRNA + S-adenosyl-L-methionine = epoxyqueuosine(34) in tRNA + adenine + L-methionine + 2 H(+). It participates in tRNA modification; tRNA-queuosine biosynthesis. Transfers and isomerizes the ribose moiety from AdoMet to the 7-aminomethyl group of 7-deazaguanine (preQ1-tRNA) to give epoxyqueuosine (oQ-tRNA). The chain is S-adenosylmethionine:tRNA ribosyltransferase-isomerase from Dechloromonas aromatica (strain RCB).